Here is a 218-residue protein sequence, read N- to C-terminus: MPMILGYWDIRGLAHAIRLLLEYTDSSYEEKKYTMGDAPDYDRSQWLNEKFKLGLDFPNLPYLIDGAHKITQSNAILCYIARKHNLCGETEEEKIRVDILENQTMDNHMQLGMICYNPEFEKLKPKYLEELPEKLKLYSEFLGKRPWFAGNKITFVDFLVYDVLDLHRIFEPKCLDAFPNLKDFISRFEGLEKISAYMKSSRFLPRPVFSKMAVWGNK.

In terms of domain architecture, GST N-terminal spans 2 to 88 (PMILGYWDIR…YIARKHNLCG (87 aa)). 7-8 (YW) serves as a coordination point for glutathione. A Phosphothreonine modification is found at T34. Residues 43 to 46 (RSQW), K50, 59 to 60 (NL), and 72 to 73 (QS) each bind glutathione. The region spanning 90–208 (TEEEKIRVDI…KSSRFLPRPV (119 aa)) is the GST C-terminal domain. Y116 provides a ligand contact to substrate. Phosphoserine is present on S210.

It belongs to the GST superfamily. Mu family. As to quaternary structure, homodimer. In terms of tissue distribution, liver (at protein level).

The protein localises to the cytoplasm. It catalyses the reaction RX + glutathione = an S-substituted glutathione + a halide anion + H(+). The enzyme catalyses prostaglandin A2 + glutathione = prostaglandin A2-S-(R)-glutathione. The catalysed reaction is prostaglandin J2 + glutathione = prostaglandin J2-S-(R)-glutathione. It carries out the reaction prostaglandin J2 + glutathione = prostaglandin J2-S-(S)-glutathione. It catalyses the reaction prostaglandin A2 + glutathione = prostaglandin A2-S-(S)-glutathione. The enzyme catalyses 11(S)-hydroxy-14(S),15(S)-epoxy-(5Z,8Z,12E)-eicosatrienoate + glutathione = (11S,15S)-dihydroxy-14(R)-S-glutathionyl-(5Z,8Z,12E)-eicosatrienoate. Its function is as follows. Conjugation of reduced glutathione to a wide number of exogenous and endogenous hydrophobic electrophiles. Involved in the formation of glutathione conjugates of both prostaglandin A2 (PGA2) and prostaglandin J2 (PGJ2). Participates in the formation of novel hepoxilin regioisomers. This is Glutathione S-transferase Mu 1 from Homo sapiens (Human).